Consider the following 149-residue polypeptide: Large ribosomal subunit protein bL9 (149 aa).

This sequence belongs to the bacterial ribosomal protein bL9 family.

Its function is as follows. Binds to the 23S rRNA. This is Large ribosomal subunit protein bL9 from Citrobacter koseri (strain ATCC BAA-895 / CDC 4225-83 / SGSC4696).